The sequence spans 345 residues: Phosphoribosylformylglycinamidine cyclo-ligase (345 aa).

This sequence belongs to the AIR synthase family.

The protein resides in the cytoplasm. It catalyses the reaction 2-formamido-N(1)-(5-O-phospho-beta-D-ribosyl)acetamidine + ATP = 5-amino-1-(5-phospho-beta-D-ribosyl)imidazole + ADP + phosphate + H(+). Its pathway is purine metabolism; IMP biosynthesis via de novo pathway; 5-amino-1-(5-phospho-D-ribosyl)imidazole from N(2)-formyl-N(1)-(5-phospho-D-ribosyl)glycinamide: step 2/2. The protein is Phosphoribosylformylglycinamidine cyclo-ligase of Shewanella sediminis (strain HAW-EB3).